We begin with the raw amino-acid sequence, 61 residues long: Small ribosomal subunit protein uS14 (61 aa).

Residues C24, C27, C40, and C43 each contribute to the Zn(2+) site.

The protein belongs to the universal ribosomal protein uS14 family. Zinc-binding uS14 subfamily. Part of the 30S ribosomal subunit. Contacts proteins S3 and S10. Zn(2+) serves as cofactor.

Binds 16S rRNA, required for the assembly of 30S particles and may also be responsible for determining the conformation of the 16S rRNA at the A site. This Clostridioides difficile (strain 630) (Peptoclostridium difficile) protein is Small ribosomal subunit protein uS14.